Consider the following 363-residue polypeptide: NAD(P)H-quinone oxidoreductase subunit 1, chloroplastic (363 aa).

Helical transmembrane passes span 30-50, 104-124, 127-147, 253-273, 300-320, and 343-363; these read LVPI…IVWL, IAVI…HLVL, LGIG…GLLM, FGLF…FVTV, VFGT…FLFI, and FLLP…LLSL.

The protein belongs to the complex I subunit 1 family. In terms of assembly, NDH is composed of at least 16 different subunits, 5 of which are encoded in the nucleus.

It is found in the plastid. The protein localises to the chloroplast thylakoid membrane. It carries out the reaction a plastoquinone + NADH + (n+1) H(+)(in) = a plastoquinol + NAD(+) + n H(+)(out). The enzyme catalyses a plastoquinone + NADPH + (n+1) H(+)(in) = a plastoquinol + NADP(+) + n H(+)(out). Its function is as follows. NDH shuttles electrons from NAD(P)H:plastoquinone, via FMN and iron-sulfur (Fe-S) centers, to quinones in the photosynthetic chain and possibly in a chloroplast respiratory chain. The immediate electron acceptor for the enzyme in this species is believed to be plastoquinone. Couples the redox reaction to proton translocation, and thus conserves the redox energy in a proton gradient. This is NAD(P)H-quinone oxidoreductase subunit 1, chloroplastic from Piper cenocladum (Ant piper).